The following is a 145-amino-acid chain: LIM domain only protein 3 (145 aa).

LIM zinc-binding domains are found at residues 11 to 73 (KGCA…LFGT) and 75 to 137 (GNCA…GLMK).

The chain is LIM domain only protein 3 (Lmo3) from Rattus norvegicus (Rat).